Here is a 652-residue protein sequence, read N- to C-terminus: UvrABC system protein C (652 aa).

The GIY-YIG domain maps to 20–99 (PEPGCYLMRD…IKNHQPHFNV (80 aa)). The 36-residue stretch at 209 to 244 (DELQRLLDEQMNRYAERLDFESAARVRDQLQGLDQL) folds into the UVR domain.

This sequence belongs to the UvrC family. Interacts with UvrB in an incision complex.

It is found in the cytoplasm. Functionally, the UvrABC repair system catalyzes the recognition and processing of DNA lesions. UvrC both incises the 5' and 3' sides of the lesion. The N-terminal half is responsible for the 3' incision and the C-terminal half is responsible for the 5' incision. This Parasynechococcus marenigrum (strain WH8102) protein is UvrABC system protein C.